The sequence spans 383 residues: Succinyl-diaminopimelate desuccinylase (383 aa).

Histidine 73 contributes to the Zn(2+) binding site. Residue aspartate 75 is part of the active site. Aspartate 107 provides a ligand contact to Zn(2+). The Proton acceptor role is filled by glutamate 141. Zn(2+) is bound by residues glutamate 142, glutamate 170, and histidine 356.

Belongs to the peptidase M20A family. DapE subfamily. In terms of assembly, homodimer. It depends on Zn(2+) as a cofactor. The cofactor is Co(2+).

It carries out the reaction N-succinyl-(2S,6S)-2,6-diaminopimelate + H2O = (2S,6S)-2,6-diaminopimelate + succinate. It participates in amino-acid biosynthesis; L-lysine biosynthesis via DAP pathway; LL-2,6-diaminopimelate from (S)-tetrahydrodipicolinate (succinylase route): step 3/3. Functionally, catalyzes the hydrolysis of N-succinyl-L,L-diaminopimelic acid (SDAP), forming succinate and LL-2,6-diaminopimelate (DAP), an intermediate involved in the bacterial biosynthesis of lysine and meso-diaminopimelic acid, an essential component of bacterial cell walls. The sequence is that of Succinyl-diaminopimelate desuccinylase from Pseudomonas fluorescens (strain ATCC BAA-477 / NRRL B-23932 / Pf-5).